The sequence spans 317 residues: Transcription factor MYB35 (317 aa).

2 HTH myb-type domains span residues 9 to 65 (KSNV…RPDL) and 66 to 116 (KHDS…KKKL). DNA-binding regions (H-T-H motif) lie at residues 37–61 (WSLI…TNYL) and 89–112 (WSSI…NTKL).

In terms of tissue distribution, inflorescences-specific. Accumulates in anthers, especially in tapetum and meiocytes/microsporocytes and microspores during anther development.

It localises to the nucleus. Required for anther development and early tapetal function during microspore maturation. Regulates callose dissolution required for microspores release from the tetrads. This Arabidopsis thaliana (Mouse-ear cress) protein is Transcription factor MYB35.